A 637-amino-acid chain; its full sequence is Protein arginine N-methyltransferase 5 (637 aa).

Ala-2 is subject to N-acetylalanine. A TIM barrel region spans residues 13-292; it reads RVSSGRDLNC…YLEYLSQNRP (280 aa). Residues 308–615 form the SAM-dependent MTase PRMT-type domain; sequence LQSPLQPLMD…SNSKKVWYEW (308 aa). Tyr-324 provides a ligand contact to S-adenosyl-L-methionine. An a protein-binding site is contributed by Phe-327. S-adenosyl-L-methionine is bound by residues 333–334, Glu-392, and 419–420; these read KY and DM. A protein-binding residues include Glu-435 and Glu-444. Residues Glu-435 and Glu-444 each act as proton donor/acceptor in the active site. The beta barrel stretch occupies residues 465 to 637; sequence PGEYTSFLAP…PTGRSYTIGL (173 aa). Positions 488–494 are dimerization; sequence REKDRDP.

Belongs to the class I-like SAM-binding methyltransferase superfamily. Protein arginine N-methyltransferase family. As to quaternary structure, forms, at least, homodimers and homotetramers. Component of the methylosome complex, composed of PRMT5, WDR77 and CLNS1A. Found in a complex composed of PRMT5, WDR77 and RIOK1. RIOK1 and CLNS1A associate with PRMT5 in a mutually exclusive fashion, which allows the recruitment of distinct methylation substrates, such as nucleolin/NCL and Sm proteins, respectively. Interacts with PRDM1. Identified in a complex composed of methylosome and PRMT1 and ERH. Interacts with EGFR; methylates EGFR and stimulates EGFR-mediated ERK activation. Interacts with HOXA9. Interacts with SRGAP2. Found in a complex with COPRS, RUNX1 and CBFB. Interacts with CHTOP; the interaction symmetrically methylates CHTOP, but seems to require the presence of PRMT1. Interacts with EPB41L3; this modulates methylation of target proteins. Component of a high molecular weight E2F-pocket protein complex, CERC (cyclin E1 repressor complex). Associates with SWI/SNF remodeling complexes containing SMARCA2 and SMARCA4. Interacts with JAK2, SSTR1, SUPT5H, BRAF and with active RAF1. Interacts with LSM11, PRMT7 and SNRPD3. Interacts with COPRS; promoting its recruitment on histone H4. Interacts with CLNS1A/pICln. Identified in a complex with CLNS1A/pICln and Sm proteins. Interacts with RPS10. Interacts with WDR77. Interacts with IWS1. Interacts with CRY1. Interacts with POLR2A. Interacts with SMN1/SMN2. Interacts with LYAR; this interaction is direct. Interacts with TTC5/STRAP; this interaction is DNA damage-dependent and promotes PRMT5 interaction with p53/TP53. Interacts with p53/TP53 in response to DNA damage; the interaction is TTC5/STRAP dependent. Interacts with FAM47E; the interaction is direct, promotes PRMT5 localization to chromatin, and does not disrupt its association with WDR77 or STUB1. Interacts with TDRD6. Interacts with STUB1. Interacts with MBD2. Does not interact with MBD3.

Its subcellular location is the cytoplasm. The protein resides in the nucleus. The protein localises to the golgi apparatus. It carries out the reaction L-arginyl-[protein] + 2 S-adenosyl-L-methionine = N(omega),N(omega)'-dimethyl-L-arginyl-[protein] + 2 S-adenosyl-L-homocysteine + 2 H(+). With respect to regulation, activity is increased by EGF, HGF, FGF1 or FGF2 treatments, and slightly decreased by NGF treatment. Arginine methyltransferase that can both catalyze the formation of omega-N monomethylarginine (MMA) and symmetrical dimethylarginine (sDMA), with a preference for the formation of MMA. Specifically mediates the symmetrical dimethylation of arginine residues in the small nuclear ribonucleoproteins Sm D1 (SNRPD1) and Sm D3 (SNRPD3); such methylation being required for the assembly and biogenesis of snRNP core particles. Methylates SUPT5H and may regulate its transcriptional elongation properties. May methylate the N-terminal region of MBD2. Mono- and dimethylates arginine residues of myelin basic protein (MBP) in vitro. May play a role in cytokine-activated transduction pathways. Negatively regulates cyclin E1 promoter activity and cellular proliferation. Methylates histone H2A and H4 'Arg-3' during germ cell development. Methylates histone H3 'Arg-8', which may repress transcription. Methylates the Piwi proteins (PIWIL1, PIWIL2 and PIWIL4), methylation of Piwi proteins being required for the interaction with Tudor domain-containing proteins and subsequent localization to the meiotic nuage. Methylates RPS10. Attenuates EGF signaling through the MAPK1/MAPK3 pathway acting at 2 levels. First, monomethylates EGFR; this enhances EGFR 'Tyr-1197' phosphorylation and PTPN6 recruitment, eventually leading to reduced SOS1 phosphorylation. Second, methylates RAF1 and probably BRAF, hence destabilizing these 2 signaling proteins and reducing their catalytic activity. Required for induction of E-selectin and VCAM-1, on the endothelial cells surface at sites of inflammation. Methylates HOXA9. Methylates and regulates SRGAP2 which is involved in cell migration and differentiation. Acts as a transcriptional corepressor in CRY1-mediated repression of the core circadian component PER1 by regulating the H4R3 dimethylation at the PER1 promoter. Methylates GM130/GOLGA2, regulating Golgi ribbon formation. Methylates H4R3 in genes involved in glioblastomagenesis in a CHTOP- and/or TET1-dependent manner. Symmetrically methylates POLR2A, a modification that allows the recruitment to POLR2A of proteins including SMN1/SMN2 and SETX. This is required for resolving RNA-DNA hybrids created by RNA polymerase II, that form R-loop in transcription terminal regions, an important step in proper transcription termination. Along with LYAR, binds the promoter of gamma-globin HBG1/HBG2 and represses its expression. Symmetrically methylates NCL. Methylates p53/TP53; methylation might possibly affect p53/TP53 target gene specificity. Involved in spliceosome maturation and mRNA splicing in prophase I spermatocytes through the catalysis of the symmetrical arginine dimethylation of SNRPB (small nuclear ribonucleoprotein-associated protein) and the interaction with tudor domain-containing protein TDRD6. This Bos taurus (Bovine) protein is Protein arginine N-methyltransferase 5 (PRMT5).